The primary structure comprises 126 residues: Protein ApaG (126 aa).

The 125-residue stretch at 2–126 (SDPRYQIDVS…FRLAVPGALH (125 aa)) folds into the ApaG domain.

The polypeptide is Protein ApaG (Pseudomonas putida (strain W619)).